A 283-amino-acid chain; its full sequence is Aldo-keto reductase MSMEG_2407/MSMEI_2346 (283 aa).

Tyr58 serves as the catalytic Proton donor. Residues Gly196, Leu198, Val200, Ile236, Arg238, Ser239, Ala240, Arg244, Ser247, Asn248, and Arg274 each coordinate NADPH.

This sequence belongs to the aldo/keto reductase family. As to quaternary structure, monomer.

With respect to regulation, inhibited by the antituberculosis drug isoniazid (INH). Catalyzes the NADPH-dependent reduction of dicarbonyls. Exhibits narrow substrate specificity, with preferential activity against the dicarbonyl substrates phenylglyoxal and methylglyoxal. Exhibits weak activity with ethyl-2-methyl acetoacetate. Cannot use NADH. May play an important role in the detoxification of methylglyoxal. In Mycolicibacterium smegmatis (strain ATCC 700084 / mc(2)155) (Mycobacterium smegmatis), this protein is Aldo-keto reductase MSMEG_2407/MSMEI_2346.